The chain runs to 434 residues: MSNFSPREIVSELDRFIIGQKDAKRAVAIALRNRWRRQQLEGQMREEVMPKNILMIGPTGVGKTEISRRLAKLAGAPFVKVEATKFTEVGYVGRDVEQIIRDLVEIAITLVREKRREDVKAKAHLNAEERVLDALVGKTASPATRDSFRKKLRNGEMDDKEIEIEVSDSGASPNFEIPGMPGANIGVLNISDMLGKAMGGRTKTRKTTVKDSYPILINDESDKLLDQDQIVQEALRVSEDEGIVFIDEIDKIAAREGGSGAGVSREGVQRDLLPLVEGTTVATKYGPVKTDHILFITSGAFHVSKPSDLLPELQGRLPIRVELSALTREDFRRILTETEASLIKQYIALMETEEVKLEFSDDAIDALADIAVDLNATVENIGARRLQTVIEKVLDEISFTAPDKAGATFIIDAAYVKEKIGGLAKNTDLSRFIL.

ATP-binding positions include Ile-18, Gly-60 to Glu-65, Asp-247, Glu-312, and Arg-384.

Belongs to the ClpX chaperone family. HslU subfamily. As to quaternary structure, a double ring-shaped homohexamer of HslV is capped on each side by a ring-shaped HslU homohexamer. The assembly of the HslU/HslV complex is dependent on binding of ATP.

The protein localises to the cytoplasm. Functionally, ATPase subunit of a proteasome-like degradation complex; this subunit has chaperone activity. The binding of ATP and its subsequent hydrolysis by HslU are essential for unfolding of protein substrates subsequently hydrolyzed by HslV. HslU recognizes the N-terminal part of its protein substrates and unfolds these before they are guided to HslV for hydrolysis. The sequence is that of ATP-dependent protease ATPase subunit HslU from Brucella abortus (strain S19).